The chain runs to 393 residues: Thermostable carboxypeptidase 2 (393 aa).

Zn(2+)-binding residues include H104, D109, and H245. The Proton donor role is filled by Y302. Residue E373 is the Nucleophile of the active site.

The protein belongs to the peptidase M20 family. Homotetramer. Zn(2+) is required as a cofactor.

Can release basic, acidic, aromatic, and, to a lesser extent, aliphatic amino acids. The polypeptide is Thermostable carboxypeptidase 2 (cpsA2) (Saccharolobus solfataricus (strain ATCC 35092 / DSM 1617 / JCM 11322 / P2) (Sulfolobus solfataricus)).